A 1404-amino-acid chain; its full sequence is Proteoglycan 4 (1404 aa).

The signal sequence occupies residues 1 to 24 (MAWKTLPIYLLLLLSVFVIQQVSS). SMB domains are found at residues 26–69 (DLSS…AELS) and 66–108 (AELS…AEVH). Disulfide bonds link Cys-30-Cys-34, Cys-30-Cys-46, Cys-34-Cys-64, Cys-44-Cys-46, Cys-44-Cys-57, Cys-50-Cys-56, Cys-57-Cys-64, Cys-70-Cys-74, Cys-70-Cys-86, Cys-74-Cys-104, Cys-84-Cys-86, Cys-84-Cys-97, Cys-90-Cys-96, and Cys-97-Cys-104. Residues 111–966 (TSPPSSKKAP…TTQVTSTTTQ (856 aa)) form a disordered region. O-linked (GalNAc...) serine glycosylation is found at Ser-123 and Ser-136. The segment covering 132–146 (TTKRSPKPPNKKKTK) has biased composition (basic residues). Positions 166–177 (SSSSSSSSSSSS) are enriched in low complexity. The segment covering 193-205 (ELQKKLKVKDNKK) has biased composition (basic and acidic residues). Asn-206 carries N-linked (GlcNAc...) asparagine glycosylation. Over residues 235 to 252 (TPDTSTTQHNKVSTSPKI) the composition is skewed to polar residues. O-linked (GalNAc...) threonine glycans are attached at residues Thr-240 and Thr-253. Residues 266–276 (PNSDTSKETSL) are compositionally biased toward polar residues. O-linked (GalNAc...) threonine glycosylation is found at Thr-277, Thr-291, and Thr-305. An O-linked (GalNAc...) serine glycan is attached at Ser-306. Thr-310 carries O-linked (GalNAc...) threonine glycosylation. O-linked (GalNAc...) serine glycosylation is present at Ser-317. O-linked (GalNAc...) threonine glycans are attached at residues Thr-324, Thr-332, and Thr-338. Low complexity-rich tracts occupy residues 329–348 (AKPTPKAETTTKGPALTTPK) and 356–405 (KEPA…KEPA). The stretch at 348–355 (KEPTPTTP) is repeat 1. The interval 348-855 (KEPTPTTPKE…TPETPPPTTS (508 aa)) is 59 X 8 AA repeats of K-X-P-X-P-T-T-X. One copy of the 2; approximate repeat lies at 356 to 363 (KEPASTTP). Residues 364-371 (KEPTPTTI) form repeat 3. An O-linked (GalNAc...) threonine glycan is attached at Thr-367. The 4; approximate repeat unit spans residues 372–378 (KSAPTTP). O-linked (GalNAc...) serine glycosylation is present at Ser-373. Thr-376, Thr-384, and Thr-385 each carry an O-linked (GalNAc...) threonine glycan. Residues 379–386 (KEPAPTTT) form repeat 5. Residues 387 to 393 (KSAPTTP) form a 6; approximate repeat. Residue Ser-388 is glycosylated (O-linked (GalNAc...) serine). O-linked (GalNAc...) threonine glycans are attached at residues Thr-391, Thr-399, Thr-400, Thr-407, Thr-408, Thr-415, and Thr-423. 4 repeat units span residues 394-401 (KEPAPTTT), 402-409 (KEPAPTTP), 410-417 (KEPAPTTT), and 418-425 (KEPAPTTT). Residues 413–431 (APTTTKEPAPTTTKSAPTT) show a composition bias toward low complexity. One copy of the 11; approximate repeat lies at 426–432 (KSAPTTP). O-linked (GalNAc...) serine glycosylation is present at Ser-427. Residues Thr-430, Thr-438, Thr-439, Thr-446, Thr-447, Thr-454, and Thr-455 are each glycosylated (O-linked (GalNAc...) threonine). Pro residues-rich tracts occupy residues 432–467 (PKEPAPTTPKKPAPTTPKEPAPTTPKEPTPTTPKEP) and 476–506 (PTTPKEPAPTAPKKPAPTTPKEPAPTTPKEP). 4 tandem repeats follow at residues 433–440 (KEPAPTTP), 441–448 (KKPAPTTP), 449–456 (KEPAPTTP), and 457–464 (KEPTPTTP). The 16; approximate repeat unit spans residues 465 to 471 (KEPAPTT). Copy 17 of the repeat occupies 472 to 479 (KEPAPTTP). O-linked (GalNAc...) threonine glycans are attached at residues Thr-477, Thr-478, Thr-485, Thr-493, Thr-494, Thr-501, Thr-502, and Thr-509. The stretch at 480–487 (KEPAPTAP) is one 18; approximate repeat. The 19; approximate repeat unit spans residues 488–495 (KKPAPTTP). 4 repeat units span residues 496–503 (KEPAPTTP), 504–511 (KEPAPTTT), 512–519 (KEPSPTTP), and 520–527 (KEPAPTTT). A compositionally biased stretch (low complexity) spans 523 to 561 (APTTTKSAPTTTKEPAPTTTKSAPTTPKEPSPTTTKEPA). Thr-525 is a glycosylation site (O-linked (GalNAc...) threonine). The 24; approximate repeat unit spans residues 528 to 534 (KSAPTTT). The O-linked (GalNAc...) serine glycan is linked to Ser-529. 3 O-linked (GalNAc...) threonine glycosylation sites follow: Thr-532, Thr-540, and Thr-541. Copy 25 of the repeat occupies 535 to 542 (KEPAPTTT). The stretch at 543–549 (KSAPTTP) is one 26; approximate repeat. 6 repeat units span residues 550–557 (KEPSPTTT), 558–565 (KEPAPTTP), 566–573 (KEPAPTTP), 574–581 (KKPAPTTP), 582–589 (KEPAPTTP), and 590–597 (KEPAPTTT). Ser-553 carries an O-linked (GalNAc...) serine glycan. Residues Thr-555, Thr-563, Thr-564, Thr-571, Thr-572, Thr-579, Thr-580, Thr-587, Thr-588, Thr-595, Thr-603, Thr-604, Thr-611, Thr-612, Thr-616, Thr-619, and Thr-627 are each glycosylated (O-linked (GalNAc...) threonine). Residues 562–592 (PTTPKEPAPTTPKKPAPTTPKEPAPTTPKEP) are compositionally biased toward pro residues. One copy of the 33; approximate repeat lies at 598–605 (KKPAPTTP). Residues 602-611 (PTTPKEPAPT) show a composition bias toward pro residues. The stretch at 606–613 (KEPAPTTP) is repeat 34. Positions 612–636 (TPKETAPTTPKKLTPTTPEKLAPTT) are enriched in low complexity. The 35; approximate repeat unit spans residues 614–621 (KETAPTTP). One copy of the 36; approximate repeat lies at 622 to 629 (KKLTPTTP). A 37; approximate repeat occupies 638–645 (EKPAPTTP). The span at 653–667 (PEEPTPTTPEEPAPT) shows a compositional bias: pro residues. Residues 662–669 (EEPAPTTP) form a 38; approximate repeat. 9 O-linked (GalNAc...) threonine glycosylation sites follow: Thr-676, Thr-683, Thr-684, Thr-691, Thr-692, Thr-699, Thr-700, Thr-704, and Thr-707. Residues 677–699 (PKEPAPTTPKEPAPTTPKEPAPT) show a composition bias toward pro residues. Repeat copies occupy residues 678–685 (KEPAPTTP), 686–693 (KEPAPTTP), and 694–701 (KEPAPTTP). Residues 700 to 721 (TPKETAPTTPKGTAPTTLKEPA) show a composition bias toward low complexity. The 42; approximate repeat unit spans residues 702-709 (KETAPTTP). One copy of the 43; approximate repeat lies at 710–717 (KGTAPTTL). The stretch at 718 to 725 (KEPAPTTP) is repeat 44. Thr-723, Thr-724, and Thr-736 each carry an O-linked (GalNAc...) threonine glycan. The segment covering 728 to 761 (PAPKELAPTTTKEPTSTTSDKPAPTTPKGTAPTT) has biased composition (low complexity). A 45; approximate repeat occupies 731-738 (KELAPTTT). The 46; approximate repeat unit spans residues 739 to 746 (KEPTSTTS). A 47; approximate repeat occupies 747–754 (DKPAPTTP). Residues 755–762 (KGTAPTTP) form a 48; approximate repeat. The span at 762-776 (PKEPAPTTPKEPAPT) shows a compositional bias: pro residues. A run of 2 repeats spans residues 763–770 (KEPAPTTP) and 771–778 (KEPAPTTP). Thr-768, Thr-769, Thr-776, and Thr-777 each carry an O-linked (GalNAc...) threonine glycan. Positions 777–790 (TPKGTAPTTLKEPA) are enriched in low complexity. The stretch at 779-786 (KGTAPTTL) is one 51; approximate repeat. Repeat 52 spans residues 787–794 (KEPAPTTP). Thr-792, Thr-793, and Thr-805 each carry an O-linked (GalNAc...) threonine glycan. Over residues 797–830 (PAPKELAPTTTKGPTSTTSDKPAPTTPKETAPTT) the composition is skewed to low complexity. Residues 800–807 (KELAPTTT) form a 53; approximate repeat. The stretch at 808-815 (KGPTSTTS) is one 54; approximate repeat. An O-linked (GalNAc...) serine glycan is attached at Ser-812. A 55; approximate repeat occupies 816-823 (DKPAPTTP). A 56; approximate repeat occupies 824–831 (KETAPTTP). O-linked (GalNAc...) threonine glycosylation is found at Thr-829, Thr-837, and Thr-838. Residues 831 to 853 (PKEPAPTTPKKPAPTTPETPPPT) show a composition bias toward pro residues. Tandem repeats lie at residues 832–839 (KEPAPTTP) and 840–847 (KKPAPTTP). The 59; approximate repeat unit spans residues 848–855 (ETPPPTTS). A compositionally biased stretch (low complexity) spans 854–866 (TSEVSTPTTTKEP). Residue Ser-892 is glycosylated (O-linked (GalNAc...) serine). Positions 899–914 (PTTKTPAATKPEMTTT) are enriched in low complexity. The O-linked (GalNAc...) threonine glycan is linked to Thr-900. Residues 915–926 (AKDKTTERDLRT) are compositionally biased toward basic and acidic residues. Low complexity predominate over residues 927-966 (TPETTTAAPKMTKETATTTEKTTESKITATTTQVTSTTTQ). 2 O-linked (GalNAc...) threonine glycosylation sites follow: Thr-930 and Thr-931. The O-linked (GalNAc...) serine glycan is linked to Ser-962. O-linked (GalNAc...) threonine glycosylation is found at Thr-963, Thr-968, Thr-975, Thr-978, Thr-979, and Thr-980. The disordered stretch occupies residues 992-1104 (ITTTEIMNKP…EDAGGAEGET (113 aa)). Residues 999–1012 (NKPEETAKPKDRAT) show a composition bias toward basic and acidic residues. Over residues 1026–1047 (KAPKKPTSTKKPKTMPRVRKPK) the composition is skewed to basic residues. Thr-1039 carries an O-linked (GalNAc...) threonine glycan. The segment covering 1048-1060 (TTPTPRKMTSTMP) has biased composition (low complexity). The span at 1073–1085 (LQTTTRPNQTPNS) shows a compositional bias: polar residues. A disulfide bond links Cys-1146 and Cys-1403. Hemopexin repeat units lie at residues 1148–1191 (GKPV…VWGI) and 1192–1239 (PSPI…FGGL). N-linked (GlcNAc...) asparagine glycosylation occurs at Asn-1159. O-linked (GalNAc...) threonine glycosylation occurs at Thr-1161.

As to quaternary structure, homodimer; disulfide-linked. Post-translationally, N-glycosylated. O-glycosylated; contains glycosaminoglycan chondroitin sulfate and keratan sulfate. O-glycosylated with sialylated oligosaccharides which are predominantly represented by the monosialylated core type I structure, NeuNAcalpha2-3Galbeta1-3GalNAc, with smaller amounts of disialylated O-glycans. In terms of processing, the disulfide bond between Cys-1146 and Cys-1403 is essential for protein cleavage. Post-translationally, proteolytically cleaved by cathepsin CTSG. Highly expressed in synovial tissue, cartilage and liver and weakly in heart and lung. Isoform B is expressed in kidney, lung, liver, heart and brain. Isoform C and isoform D are widely expressed.

It localises to the secreted. Plays a role in boundary lubrication within articulating joints. Prevents protein deposition onto cartilage from synovial fluid by controlling adhesion-dependent synovial growth and inhibiting the adhesion of synovial cells to the cartilage surface. In terms of biological role, isoform F plays a role as a growth factor acting on the primitive cells of both hematopoietic and endothelial cell lineages. This chain is Proteoglycan 4 (PRG4), found in Homo sapiens (Human).